We begin with the raw amino-acid sequence, 201 residues long: Pyridoxal 5'-phosphate synthase subunit PdxT (201 aa).

48–50 lines the L-glutamine pocket; it reads GES. Cysteine 80 serves as the catalytic Nucleophile. L-glutamine contacts are provided by residues arginine 109 and 137–138; that span reads IR. Catalysis depends on charge relay system residues histidine 180 and glutamate 182.

Belongs to the glutaminase PdxT/SNO family. In the presence of PdxS, forms a dodecamer of heterodimers. Only shows activity in the heterodimer.

It carries out the reaction aldehydo-D-ribose 5-phosphate + D-glyceraldehyde 3-phosphate + L-glutamine = pyridoxal 5'-phosphate + L-glutamate + phosphate + 3 H2O + H(+). The enzyme catalyses L-glutamine + H2O = L-glutamate + NH4(+). It functions in the pathway cofactor biosynthesis; pyridoxal 5'-phosphate biosynthesis. Catalyzes the hydrolysis of glutamine to glutamate and ammonia as part of the biosynthesis of pyridoxal 5'-phosphate. The resulting ammonia molecule is channeled to the active site of PdxS. The sequence is that of Pyridoxal 5'-phosphate synthase subunit PdxT from Cutibacterium acnes (strain DSM 16379 / KPA171202) (Propionibacterium acnes).